A 348-amino-acid polypeptide reads, in one-letter code: Growth-regulating factor 5 (348 aa).

The region spanning 24–59 is the QLQ domain; sequence VFTAAQWAELEQQALIYKYLVAGVPVPGDLLLPIRP. 2 short sequence motifs (bipartite nuclear localization signal) span residues 94–112 and 130–137; these read KKLD…KKWR and RGRNRSRK. A WRC domain is found at 97-141; the sequence is DPEPWRCRRTDGKKWRCSKEAHPDSKYCERHMHRGRNRSRKPVES. Disordered stretches follow at residues 125-165 and 306-348; these read ERHM…HDTD and LRPF…PRCD. The span at 127–136 shows a compositional bias: basic residues; it reads HMHRGRNRSR. The span at 148-161 shows a compositional bias: polar residues; that stretch reads PQSQPQLSNVTTAT. The segment covering 306-320 has biased composition (basic and acidic residues); that stretch reads LRPFFDEWPGRRDSW. Polar residues predominate over residues 329-340; sequence NQTSFSTTQLSI.

The protein belongs to the GRF family.

The protein resides in the nucleus. In terms of biological role, transcription activator that plays a regulatory role in gibberellin-induced stem elongation. This Oryza sativa subsp. japonica (Rice) protein is Growth-regulating factor 5 (GRF5).